The sequence spans 288 residues: Polyamine aminopropyltransferase (288 aa).

The PABS domain maps to 9–242 (SGWLDEYHQG…GLWSWAFASM (234 aa)). Gln36 is a binding site for S-methyl-5'-thioadenosine. Residues His67 and Asp91 each coordinate spermidine. S-methyl-5'-thioadenosine contacts are provided by residues Glu111 and 143–144 (NG). The active-site Proton acceptor is the Asp162. Pro169 is an S-methyl-5'-thioadenosine binding site.

The protein belongs to the spermidine/spermine synthase family. As to quaternary structure, homodimer or homotetramer.

It is found in the cytoplasm. The enzyme catalyses S-adenosyl 3-(methylsulfanyl)propylamine + putrescine = S-methyl-5'-thioadenosine + spermidine + H(+). It participates in amine and polyamine biosynthesis; spermidine biosynthesis; spermidine from putrescine: step 1/1. Functionally, catalyzes the irreversible transfer of a propylamine group from the amino donor S-adenosylmethioninamine (decarboxy-AdoMet) to putrescine (1,4-diaminobutane) to yield spermidine. The protein is Polyamine aminopropyltransferase of Prochlorococcus marinus (strain NATL1A).